Here is a 517-residue protein sequence, read N- to C-terminus: NADH-quinone oxidoreductase subunit N (517 aa).

14 helical membrane passes run Leu14–Val34, His40–Val60, Gly77–Ile97, Ala131–Ala151, Leu154–Leu174, Tyr189–Gly209, Val238–Ala258, Pro272–Leu292, Phe306–Val326, Leu334–Ser354, Met362–Val382, Phe404–Gly424, Ser451–Gly471, and Gly481–Val501.

The protein belongs to the complex I subunit 2 family. As to quaternary structure, NDH-1 is composed of 14 different subunits. Subunits NuoA, H, J, K, L, M, N constitute the membrane sector of the complex.

Its subcellular location is the cell membrane. The enzyme catalyses a quinone + NADH + 5 H(+)(in) = a quinol + NAD(+) + 4 H(+)(out). In terms of biological role, NDH-1 shuttles electrons from NADH, via FMN and iron-sulfur (Fe-S) centers, to quinones in the respiratory chain. The immediate electron acceptor for the enzyme in this species is believed to be a menaquinone. Couples the redox reaction to proton translocation (for every two electrons transferred, four hydrogen ions are translocated across the cytoplasmic membrane), and thus conserves the redox energy in a proton gradient. The protein is NADH-quinone oxidoreductase subunit N of Salinispora arenicola (strain CNS-205).